The sequence spans 234 residues: L-cystine transport system permease protein TcyB (234 aa).

A run of 5 helical transmembrane segments spans residues 8 to 28 (ALTLGTAIPWDLVQQSFWPIL), 36 to 56 (IPLTILSFIFGMILALITALA), 78 to 98 (TPLLVQLFIIFYLFPAFNVTL), 100 to 120 (PFPSAVIAFSLNVGAYASEII), and 199 to 219 (ILVIYIEAAFIYWIICFLLSL). One can recognise an ABC transmembrane type-1 domain in the interval 32–221 (IYYTIPLTIL…IICFLLSLVQ (190 aa)).

The protein belongs to the binding-protein-dependent transport system permease family. In terms of assembly, the complex is composed of two ATP-binding proteins (TcyC), two transmembrane proteins (TcyB) and a solute-binding protein (TcyA).

Its subcellular location is the cell membrane. Its function is as follows. Part of the ABC transporter complex TcyABC involved in L-cystine import. Probably responsible for the translocation of the substrate across the membrane. This chain is L-cystine transport system permease protein TcyB (tcyB), found in Bacillus subtilis (strain 168).